The following is a 66-amino-acid chain: MKNGTVKWFNADKGYGFITGEDGNDVFVHFSAIQTDGFKTLEEGQKVTFDEESSDRGPQAANVVPQ.

The 60-residue stretch at 4-63 folds into the CSD domain; the sequence is GTVKWFNADKGYGFITGEDGNDVFVHFSAIQTDGFKTLEEGQKVTFDEESSDRGPQAANV. Residues 47–66 are disordered; that stretch reads VTFDEESSDRGPQAANVVPQ.

It localises to the cytoplasm. The chain is Cold shock protein 1 (csp) from Lactiplantibacillus plantarum (strain ATCC BAA-793 / NCIMB 8826 / WCFS1) (Lactobacillus plantarum).